Here is a 1422-residue protein sequence, read N- to C-terminus: YEATS domain-containing protein 2 (1422 aa).

Lys9 participates in a covalent cross-link: Glycyl lysine isopeptide (Lys-Gly) (interchain with G-Cter in SUMO2). Positions 47 to 80 (KEQFALEMKNKEHEIEVIDQRLIEARRMMDKLRA) form a coiled coil. Lys113 is covalently cross-linked (Glycyl lysine isopeptide (Lys-Gly) (interchain with G-Cter in SUMO2)). A disordered region spans residues 117–198 (ESPSRSSSPA…KTEQRNADLT (82 aa)). Ser118, Ser120, and Ser157 each carry phosphoserine. Polar residues predominate over residues 119–148 (PSRSSSPANQRAETPSANHSESDSLSQHND). Residues 149-165 (FLSDKDNNSNMDIEERL) show a composition bias toward basic and acidic residues. Residues 166–176 (SNNMEQRPSRN) are compositionally biased toward polar residues. Basic and acidic residues predominate over residues 177–198 (TGRDTSRITGSHKTEQRNADLT). Lys189 participates in a covalent cross-link: Glycyl lysine isopeptide (Lys-Gly) (interchain with G-Cter in SUMO2). One can recognise a YEATS domain in the interval 200–345 (ETSRLFVKKT…EDCIYPQSSE (146 aa)). Histone H3K27cr binding stretches follow at residues 259 to 261 (HPS) and 282 to 284 (WGE). Residue Lys370 forms a Glycyl lysine isopeptide (Lys-Gly) (interchain with G-Cter in SUMO2) linkage. At Thr407 the chain carries Phosphothreonine. Phosphoserine occurs at positions 447, 463, 465, 471, and 473. The interval 465-486 (SPISTPSPSPLPRTPTSTPVHV) is disordered. The residue at position 478 (Thr478) is a Phosphothreonine. Residue Lys487 forms a Glycyl lysine isopeptide (Lys-Gly) (interchain with G-Cter in SUMO2) linkage. The span at 513–535 (TTPSTGSPTNKISTASQVSQGTG) shows a compositional bias: polar residues. A disordered region spans residues 513-540 (TTPSTGSPTNKISTASQVSQGTGSPVPK). Ser536 carries the phosphoserine modification. Lys552 participates in a covalent cross-link: Glycyl lysine isopeptide (Lys-Gly) (interchain with G-Cter in SUMO2). Ser575 bears the Phosphoserine mark. Lys592 is covalently cross-linked (Glycyl lysine isopeptide (Lys-Gly) (interchain with G-Cter in SUMO2)). Position 627 is a phosphoserine (Ser627). Residues Lys649 and Lys773 each participate in a glycyl lysine isopeptide (Lys-Gly) (interchain with G-Cter in SUMO2) cross-link. The segment at 794–842 (GSAASGGSGAGGGGGGGGGGGSGSGGGGSTGGGGGTAGGGTQSTAGPGG) is disordered. The span at 797–842 (ASGGSGAGGGGGGGGGGGSGSGGGGSTGGGGGTAGGGTQSTAGPGG) shows a compositional bias: gly residues. Lys923 is covalently cross-linked (Glycyl lysine isopeptide (Lys-Gly) (interchain with G-Cter in SUMO2)). Residue Lys1110 forms a Glycyl lysine isopeptide (Lys-Gly) (interchain with G-Cter in SUMO1); alternate linkage. A Glycyl lysine isopeptide (Lys-Gly) (interchain with G-Cter in SUMO2); alternate cross-link involves residue Lys1110. Residue Lys1130 forms a Glycyl lysine isopeptide (Lys-Gly) (interchain with G-Cter in SUMO2) linkage. Thr1219 bears the Phosphothreonine mark. Residues Lys1222 and Lys1285 each participate in a glycyl lysine isopeptide (Lys-Gly) (interchain with G-Cter in SUMO2) cross-link.

As to quaternary structure, component of the ADA2A-containing complex (ATAC), composed of KAT14, KAT2A, TADA2L, TADA3L, ZZ3, MBIP, WDR5, YEATS2, SGF29 and DR1.

It localises to the nucleus. Its function is as follows. Chromatin reader component of the ATAC complex, a complex with histone acetyltransferase activity on histones H3 and H4. YEATS2 specifically recognizes and binds histone H3 crotonylated at 'Lys-27' (H3K27cr). Crotonylation marks active promoters and enhancers and confers resistance to transcriptional repressors. In Homo sapiens (Human), this protein is YEATS domain-containing protein 2.